Consider the following 720-residue polypeptide: Polyribonucleotide nucleotidyltransferase (720 aa).

Mg(2+) contacts are provided by Asp484 and Asp490. Residues 551 to 610 enclose the KH domain; that stretch reads PRMYKINIDPSKIGSVIGSGGKTIRSIIEQTNTTVDIENDGTVVIGAIDEASAKKAIKII. The S1 motif domain maps to 620 to 688; sequence GSIYTGKVTR…NQGRVNLSHR (69 aa). Residues 697-720 form a disordered region; sequence PISRNRDSQPRRPGPFRPSDRSNS.

It belongs to the polyribonucleotide nucleotidyltransferase family. Mg(2+) is required as a cofactor.

It is found in the cytoplasm. It catalyses the reaction RNA(n+1) + phosphate = RNA(n) + a ribonucleoside 5'-diphosphate. Its function is as follows. Involved in mRNA degradation. Catalyzes the phosphorolysis of single-stranded polyribonucleotides processively in the 3'- to 5'-direction. The chain is Polyribonucleotide nucleotidyltransferase from Dehalococcoides mccartyi (strain ATCC BAA-2100 / JCM 16839 / KCTC 5957 / BAV1).